The chain runs to 1292 residues: SH3 and multiple ankyrin repeat domains protein 2 (1292 aa).

In terms of domain architecture, PDZ spans 56–150 (TVVLQKKDNE…HLVLKVVTVT (95 aa)). Disordered stretches follow at residues 155–176 (PDDT…TALS), 331–393 (MPDA…SDNV), 488–508 (IKEP…METD), 604–656 (SSNA…KLLD), 671–743 (ALKE…EKKN), 774–811 (LTES…SECG), and 938–968 (IEEV…TLSS). Pro residues predominate over residues 338 to 354 (IPPPPATLPPSPPPPSP). Positions 355 to 365 (SSFNSPKSPAP) are enriched in low complexity. A compositionally biased stretch (polar residues) spans 375 to 384 (FTQNSGTKSP). Positions 492–504 (STSSSGKSSQGSS) are enriched in low complexity. Over residues 604–623 (SSNAFTNNDSSHQGDVSNAR) the composition is skewed to polar residues. Basic and acidic residues predominate over residues 719–743 (KRQETESKHEPDSSKEEKRQGEKKN). The segment covering 941–952 (VDSRSGSDHHLE) has biased composition (basic and acidic residues). The segment covering 953-968 (TTSTISTVSSISTLSS) has biased composition (low complexity). The SH3-binding motif lies at 991 to 997 (PPVPPKP). The disordered stretch occupies residues 1087 to 1115 (TKTGEGLDSPTGMKTASLSTRGTDALSTV). A compositionally biased stretch (polar residues) spans 1098–1115 (GMKTASLSTRGTDALSTV). The SAM domain maps to 1229 to 1292 (WTKQDVAEWL…ERALKQLLDR (64 aa)).

It belongs to the SHANK family.

Its subcellular location is the cytoplasm. It localises to the synapse. The protein localises to the postsynaptic density. Seems to be an adapter protein in the postsynaptic density (PSD) of excitatory synapses that interconnects receptors of the postsynaptic membrane including NMDA-type and metabotropic glutamate receptors, and the actin-based cytoskeleton. May play a role in the structural and functional organization of the dendritic spine and synaptic junction. This is SH3 and multiple ankyrin repeat domains protein 2 (shank2) from Xenopus laevis (African clawed frog).